Reading from the N-terminus, the 458-residue chain is D-inositol 3-phosphate glycosyltransferase (458 aa).

Residues 1–29 (MRADRPGHRSRGINPGPGMFTLVGPDERD) form a disordered region. A 1D-myo-inositol 3-phosphate-binding site is contributed by histidine 47. UDP-N-acetyl-alpha-D-glucosamine-binding positions include 53–54 (QP) and glycine 61. Residues 58-63 (DAGGMN), lysine 116, tyrosine 149, threonine 173, and arginine 193 contribute to the 1D-myo-inositol 3-phosphate site. UDP-N-acetyl-alpha-D-glucosamine contacts are provided by arginine 267, lysine 272, and valine 339. Residue alanine 351 coordinates Mg(2+). UDP-N-acetyl-alpha-D-glucosamine-binding residues include glutamate 361 and glutamate 369. Threonine 375 lines the Mg(2+) pocket.

This sequence belongs to the glycosyltransferase group 1 family. MshA subfamily. As to quaternary structure, homodimer.

It catalyses the reaction 1D-myo-inositol 3-phosphate + UDP-N-acetyl-alpha-D-glucosamine = 1D-myo-inositol 2-acetamido-2-deoxy-alpha-D-glucopyranoside 3-phosphate + UDP + H(+). Its function is as follows. Catalyzes the transfer of a N-acetyl-glucosamine moiety to 1D-myo-inositol 3-phosphate to produce 1D-myo-inositol 2-acetamido-2-deoxy-glucopyranoside 3-phosphate in the mycothiol biosynthesis pathway. The sequence is that of D-inositol 3-phosphate glycosyltransferase from Nocardioides sp. (strain ATCC BAA-499 / JS614).